The sequence spans 186 residues: Peptidyl-tRNA hydrolase (186 aa).

Y13 contacts tRNA. The active-site Proton acceptor is the H18. 3 residues coordinate tRNA: Y59, N61, and N107.

Belongs to the PTH family. In terms of assembly, monomer.

The protein localises to the cytoplasm. The enzyme catalyses an N-acyl-L-alpha-aminoacyl-tRNA + H2O = an N-acyl-L-amino acid + a tRNA + H(+). Hydrolyzes ribosome-free peptidyl-tRNAs (with 1 or more amino acids incorporated), which drop off the ribosome during protein synthesis, or as a result of ribosome stalling. In terms of biological role, catalyzes the release of premature peptidyl moieties from peptidyl-tRNA molecules trapped in stalled 50S ribosomal subunits, and thus maintains levels of free tRNAs and 50S ribosomes. The polypeptide is Peptidyl-tRNA hydrolase (Thermotoga maritima (strain ATCC 43589 / DSM 3109 / JCM 10099 / NBRC 100826 / MSB8)).